A 399-amino-acid polypeptide reads, in one-letter code: 4-hydroxyphenylpyruvate dioxygenase (399 aa).

VOC domains are found at residues 23-166 (GYDH…LIER) and 197-355 (RIDH…LFTK). Fe cation is bound by residues His200, His283, and Glu366.

This sequence belongs to the 4HPPD family. Fe cation serves as cofactor.

It carries out the reaction 3-(4-hydroxyphenyl)pyruvate + O2 = homogentisate + CO2. The protein operates within amino-acid degradation; L-phenylalanine degradation; acetoacetate and fumarate from L-phenylalanine: step 3/6. This is 4-hydroxyphenylpyruvate dioxygenase (TCRP) from Coccidioides posadasii (strain C735) (Valley fever fungus).